The primary structure comprises 194 residues: Peptidyl-tRNA hydrolase (194 aa).

Position 17 (Y17) interacts with tRNA. H22 (proton acceptor) is an active-site residue. Residues Y68, N70, and N116 each coordinate tRNA.

It belongs to the PTH family. In terms of assembly, monomer.

The protein resides in the cytoplasm. It catalyses the reaction an N-acyl-L-alpha-aminoacyl-tRNA + H2O = an N-acyl-L-amino acid + a tRNA + H(+). Functionally, hydrolyzes ribosome-free peptidyl-tRNAs (with 1 or more amino acids incorporated), which drop off the ribosome during protein synthesis, or as a result of ribosome stalling. Catalyzes the release of premature peptidyl moieties from peptidyl-tRNA molecules trapped in stalled 50S ribosomal subunits, and thus maintains levels of free tRNAs and 50S ribosomes. The polypeptide is Peptidyl-tRNA hydrolase (Pseudomonas fluorescens (strain SBW25)).